Consider the following 923-residue polypeptide: Probable ribosylation factor GTPase-activating protein cnt6 (923 aa).

Serine 207 is subject to Phosphoserine. Basic and acidic residues predominate over residues 444-455; that stretch reads TTRRDKGREMHR. A disordered region spans residues 444-476; sequence TTRRDKGREMHRSQVIQTSGRPKSMAPPSPSPI. Residues 526 to 632 enclose the PH domain; sequence KIFKEGLLLV…WIEAICEAAK (107 aa). The region spanning 714-837 is the Arf-GAP domain; it reads NIFIQMLRKT…AFIDFAGVDA (124 aa). A C4-type zinc finger spans residues 730–754; sequence CADCGSVKDVTWCSINIPVVLCIEC.

It is found in the cytoplasm. It localises to the cell tip. GTPase-activating protein for the ADP ribosylation factor family. The sequence is that of Probable ribosylation factor GTPase-activating protein cnt6 (cnt6) from Schizosaccharomyces pombe (strain 972 / ATCC 24843) (Fission yeast).